The following is a 1342-amino-acid chain: DNA-directed RNA polymerase subunit beta (1342 aa).

It belongs to the RNA polymerase beta chain family. In terms of assembly, the RNAP catalytic core consists of 2 alpha, 1 beta, 1 beta' and 1 omega subunit. When a sigma factor is associated with the core the holoenzyme is formed, which can initiate transcription.

It carries out the reaction RNA(n) + a ribonucleoside 5'-triphosphate = RNA(n+1) + diphosphate. Its function is as follows. DNA-dependent RNA polymerase catalyzes the transcription of DNA into RNA using the four ribonucleoside triphosphates as substrates. The protein is DNA-directed RNA polymerase subunit beta of Salmonella agona (strain SL483).